We begin with the raw amino-acid sequence, 363 residues long: GDSL esterase/lipase At2g24560 (363 aa).

The N-terminal stretch at 1–22 (MSTSKTITFTLFIAALLSSCDA) is a signal peptide. Asn-25 carries N-linked (GlcNAc...) asparagine glycosylation. The active-site Nucleophile is the Ser-41. Asn-103 and Asn-325 each carry an N-linked (GlcNAc...) asparagine glycan. Active-site residues include Asp-333 and His-336.

It belongs to the 'GDSL' lipolytic enzyme family.

It localises to the secreted. The sequence is that of GDSL esterase/lipase At2g24560 from Arabidopsis thaliana (Mouse-ear cress).